A 443-amino-acid chain; its full sequence is Xaa-Pro dipeptidase (443 aa).

Residues Asp246, Asp257, His339, Glu384, and Glu423 each coordinate Mn(2+).

The protein belongs to the peptidase M24B family. Bacterial-type prolidase subfamily. Requires Mn(2+) as cofactor.

It catalyses the reaction Xaa-L-Pro dipeptide + H2O = an L-alpha-amino acid + L-proline. Its function is as follows. Splits dipeptides with a prolyl residue in the C-terminal position. This is Xaa-Pro dipeptidase from Pectobacterium carotovorum subsp. carotovorum (strain PC1).